A 357-amino-acid chain; its full sequence is uncharacterized protein (357 aa).

This is an uncharacterized protein from Caenorhabditis elegans.